A 562-amino-acid chain; its full sequence is NAD-dependent malic enzyme (562 aa).

Tyr-101 (proton donor) is an active-site residue. An NAD(+)-binding site is contributed by Arg-154. The active-site Proton acceptor is the Lys-172. A divalent metal cation-binding residues include Glu-243, Asp-244, and Asp-267. Asp-267 and Asn-415 together coordinate NAD(+).

This sequence belongs to the malic enzymes family. As to quaternary structure, homotetramer. The cofactor is Mg(2+). Mn(2+) serves as cofactor.

It catalyses the reaction (S)-malate + NAD(+) = pyruvate + CO2 + NADH. It carries out the reaction oxaloacetate + H(+) = pyruvate + CO2. The sequence is that of NAD-dependent malic enzyme from Shewanella oneidensis (strain ATCC 700550 / JCM 31522 / CIP 106686 / LMG 19005 / NCIMB 14063 / MR-1).